Here is a 653-residue protein sequence, read N- to C-terminus: E3 ubiquitin-protein ligase TRIM32 (653 aa).

An N-acetylalanine modification is found at alanine 2. The RING-type zinc finger occupies 20-65; it reads CPICMESFTEEQLRPKLLHCGHTICRQCLEKLLASSINGVRCPFCS. Serine 55 carries the post-translational modification Phosphoserine; by CHEK2. Zn(2+) contacts are provided by cysteine 100, cysteine 103, cysteine 123, and histidine 128. The B box-type zinc finger occupies 103–133; the sequence is CGRRLPRQFCRSCGLVLCEPCREADHQPPGH. The stretch at 138-197 forms a coiled coil; it reads VKEAAEERRRDFGEKLTRLRELMGELQRRKAALEGVSKDLQARYKAVLQEYGHEERRVQD. Serine 328, serine 335, and serine 339 each carry phosphoserine. NHL repeat units lie at residues 358–401, 415–458, 459–499, 562–605, and 606–646; these read LKKM…FTRK, DSFV…YTLD, GHCV…FTVD, GRQI…FPKG, and GGYS…YSYH.

It belongs to the TRIM/RBCC family. As to quaternary structure, it self-associates. Interacts with DTNBP1. Interacts with PIAS4/PIASY upon treatment with UVB and TNF-alpha. Interacts with AMBRA1; promoting activation of ULK1 through unanchored 'Lys-63'-linked polyubiquitin chains. Interacts with TICAM1 and TAX1BP1; these interactions target TICAM1 to TAX1BP1-mediated selective autophagic degradation. (Microbial infection) Interacts with S.typhimurium protein SseK3; SseK3 does not glycosylate TRIM32. Post-translationally, ubiquitinated. Phosphorylation at Ser-55 by CHEK2 under oxidative stress, activates the E3 ligase activity and promotes ATG7 ubiquitination leading to positive regulation of the autophagosme assembly. As to expression, spleen, thymus, prostate, testis, ovary, intestine, colon and skeletal muscle.

The protein localises to the cytoplasm. Its subcellular location is the mitochondrion. The protein resides in the endoplasmic reticulum. It carries out the reaction S-ubiquitinyl-[E2 ubiquitin-conjugating enzyme]-L-cysteine + [acceptor protein]-L-lysine = [E2 ubiquitin-conjugating enzyme]-L-cysteine + N(6)-ubiquitinyl-[acceptor protein]-L-lysine.. The protein operates within protein modification; protein ubiquitination. Its function is as follows. E3 ubiquitin ligase that plays a role in various biological processes including neural stem cell differentiation, innate immunity, inflammatory resonse and autophagy. Plays a role in virus-triggered induction of IFN-beta and TNF-alpha by mediating the ubiquitination of STING1. Mechanistically, targets STING1 for 'Lys-63'-linked ubiquitination which promotes the interaction of STING1 with TBK1. Regulates bacterial clearance and promotes autophagy in Mycobacterium tuberculosis-infected macrophages. Negatively regulates TLR3/4-mediated innate immune and inflammatory response by triggering the autophagic degradation of TICAM1 in an E3 activity-independent manner. Plays an essential role in oxidative stress induced cell death by inducing loss of transmembrane potential and enhancing mitochondrial reactive oxygen species (ROS) production during oxidative stress conditions. Ubiquitinates XIAP and targets it for proteasomal degradation. Ubiquitinates DTNBP1 (dysbindin) and promotes its degradation. May ubiquitinate BBS2. Ubiquitinates PIAS4/PIASY and promotes its degradation in keratinocytes treated with UVB and TNF-alpha. Also acts as a regulator of autophagy by mediating formation of unanchored 'Lys-63'-linked polyubiquitin chains that activate ULK1: interaction with AMBRA1 is required for ULK1 activation. Positively regulates dendritic branching by promoting ubiquitination and subsequent degradation of the epigenetic factor CDYL. Under metabolic stress and phosphorylation by CHK2, mediates 'Lys-63'-linked ubiquitination of ATG7 at 'Lys-45' to initiate autophagy. In terms of biological role, (Microbial infection) May play a significant role in mediating the biological activity of the HIV-1 Tat protein in vivo. Binds specifically to the activation domain of HIV-1 Tat and can also interact with the HIV-2 and EIAV Tat proteins in vivo. In Homo sapiens (Human), this protein is E3 ubiquitin-protein ligase TRIM32.